The following is a 202-amino-acid chain: Osteoclast-stimulating factor 1 (202 aa).

The 60-residue stretch at 12 to 71 folds into the SH3 domain; that stretch reads GQVKVFRALYTFEPRTPDELYFEEGDIIYISDMSDTNWWKGTCKGRTGLIPSNYVAEQAE. ANK repeat units follow at residues 72–101, 105–135, and 139–168; these read SIDN…GVNG, AGNT…ELNQ, and LGDT…RTDL.

The protein localises to the cytoplasm. Induces bone resorption, acting probably through a signaling cascade which results in the secretion of factor(s) enhancing osteoclast formation and activity. The polypeptide is Osteoclast-stimulating factor 1 (OSTF1) (Gallus gallus (Chicken)).